Consider the following 397-residue polypeptide: Proteasome-activating nucleotidase (397 aa).

Positions 12–58 form a coiled coil; it reads GYEDYITFLKRRIRQLELQVRTLEADKERLERELSRLRTEMSRLRQP. Residues 182 to 187 and His-321 each bind ATP; that span reads GCGKTL. The interval 395-397 is docks into pockets in the proteasome alpha-ring to cause gate opening; the sequence is MYG.

This sequence belongs to the AAA ATPase family. Homohexamer. The hexameric complex has a two-ring architecture resembling a top hat that caps the 20S proteasome core at one or both ends. Upon ATP-binding, the C-terminus of PAN interacts with the alpha-rings of the proteasome core by binding to the intersubunit pockets.

It localises to the cytoplasm. In terms of biological role, ATPase which is responsible for recognizing, binding, unfolding and translocation of substrate proteins into the archaeal 20S proteasome core particle. Is essential for opening the gate of the 20S proteasome via an interaction with its C-terminus, thereby allowing substrate entry and access to the site of proteolysis. Thus, the C-termini of the proteasomal ATPase function like a 'key in a lock' to induce gate opening and therefore regulate proteolysis. Unfolding activity requires energy from ATP hydrolysis, whereas ATP binding alone promotes ATPase-20S proteasome association which triggers gate opening, and supports translocation of unfolded substrates. This chain is Proteasome-activating nucleotidase, found in Thermococcus gammatolerans (strain DSM 15229 / JCM 11827 / EJ3).